The following is a 79-amino-acid chain: Hematopoietic cell signal transducer (79 aa).

The N-terminal stretch at 1-17 (MDPPGYLLFLLLLPVAA) is a signal peptide. Over 18–35 (SQTSAGSCSGCGTLSLPL) the chain is Extracellular. The helical transmembrane segment at 36 to 56 (LAGLVAADAVMSLLIVGVVFV) threads the bilayer. The Cytoplasmic segment spans residues 57–79 (CMRPHGRPAQEDGRVYINMPGRG). The residue at position 72 (tyrosine 72) is a Phosphotyrosine. A GRB2 binding site region spans residues 72-74 (YIN). The PIK3R1 binding site stretch occupies residues 72-75 (YINM).

The protein belongs to the DAP10 family. As to quaternary structure, homodimer; Disulfide-linked. Interacts with KLRK1 to form a stable complex, which results in surface expression of both proteins, whereas alone, it is minimally expressed. Interacts with PIK3R1 and GRB2. Interacts with CLEC5A. Forms an CLEC5A/TYROBP/HCST trimolecular complex depending almost solely on TYROBP. Heterohexamer composed of four subunits of HCST/DAP10 and two subunits of KLRK1. Interacts (via transmembrane domain) with KLRK1 isoform 1 (via transmembrane domain); the interaction is required for KLRK1 cell surface expression on naive NK cells and activated CD8(+) T-cells, but is dispensable on activated TYROBP-expressing NK cells. Interacts (via transmembrane domain) with KLRK1 isoform 2 (via transmembrane domain); the interaction is required for KLRK1 NK cell surface expression and induces NK cell-mediated cytotoxicity. Interacts with CD300H. Post-translationally, phosphorylated; PIK3R1 and GRB2 associate specifically with tyrosine-phosphorylated HCST. O-glycosylated.

It localises to the membrane. In terms of biological role, transmembrane adapter protein which associates with KLRK1 to form an activation receptor KLRK1-HCST in lymphoid and myeloid cells; this receptor plays a major role in triggering cytotoxicity against target cells expressing cell surface ligands such as MHC class I chain-related MICA and MICB, and UL16-binding proteins (ULBPs); these ligands are up-regulated by stress conditions and pathological state such as viral infection and tumor transformation. Functions as a docking site for PI3-kinase PIK3R1 and GRB2. Interaction of ULBPs with KLRK1-HCST triggers calcium mobilization and activation of the PIK3R1, MAP2K/ERK, and JAK2/STAT5 signaling pathways. Both PIK3R1 and GRB2 are required for full KLRK1-HCST-mediated activation and ultimate killing of target cells. In NK cells, KLRK1-HCST signaling directly induces cytotoxicity and enhances cytokine production initiated via DAP12/TYROBP-associated receptors. In T-cells, it provides primarily costimulation for TCR-induced signals. KLRK1-HCST receptor plays a role in immune surveillance against tumors and is required for cytolysis of tumors cells; indeed, melanoma cells that do not express KLRK1 ligands escape from immune surveillance mediated by NK cells. This is Hematopoietic cell signal transducer (Hcst) from Mus musculus (Mouse).